We begin with the raw amino-acid sequence, 209 residues long: NAD(P)H dehydrogenase (quinone) (209 aa).

Residues 4–199 (VNIIFHSVHA…EMARYQGRHV (196 aa)) enclose the Flavodoxin-like domain. FMN contacts are provided by residues 10–15 (SVHAHI) and 87–89 (TRY). Trp107 lines the substrate pocket. Residues 122–128 (SSGTQHG) and His143 each bind FMN.

This sequence belongs to the WrbA family. FMN serves as cofactor.

It carries out the reaction a quinone + NADH + H(+) = a quinol + NAD(+). It catalyses the reaction a quinone + NADPH + H(+) = a quinol + NADP(+). In Methanosarcina mazei (strain ATCC BAA-159 / DSM 3647 / Goe1 / Go1 / JCM 11833 / OCM 88) (Methanosarcina frisia), this protein is NAD(P)H dehydrogenase (quinone).